The chain runs to 356 residues: Cyclin-A1-4 (356 aa).

Belongs to the cyclin family. Cyclin AB subfamily.

The chain is Cyclin-A1-4 (CYCA1-4) from Oryza sativa subsp. japonica (Rice).